The primary structure comprises 461 residues: Phosphomethylpyrimidine synthase (461 aa).

Substrate-binding positions include Asn80, Met109, Tyr138, His173, 193–195 (SRG), 234–237 (DGLR), and Glu273. His277 lines the Zn(2+) pocket. Tyr300 contacts substrate. His341 lines the Zn(2+) pocket. Cys421, Cys424, and Cys429 together coordinate [4Fe-4S] cluster.

It belongs to the ThiC family. [4Fe-4S] cluster is required as a cofactor.

It carries out the reaction 5-amino-1-(5-phospho-beta-D-ribosyl)imidazole + S-adenosyl-L-methionine = 4-amino-2-methyl-5-(phosphooxymethyl)pyrimidine + CO + 5'-deoxyadenosine + formate + L-methionine + 3 H(+). The protein operates within cofactor biosynthesis; thiamine diphosphate biosynthesis. Functionally, catalyzes the synthesis of the hydroxymethylpyrimidine phosphate (HMP-P) moiety of thiamine from aminoimidazole ribotide (AIR) in a radical S-adenosyl-L-methionine (SAM)-dependent reaction. This chain is Phosphomethylpyrimidine synthase, found in Solibacter usitatus (strain Ellin6076).